The chain runs to 420 residues: MAKPNGIIYSSPKSPQHPKIYAKTQVIEHSTQSNGYLSMLRLKLSNKGFWRAYRAPSGYIATRGSSLRCHSAETRHAETEECVREYRDSSDTSSMQGKDKDPASLGKSGTPSPGLAEACKFVYNDAKFVNERAKNDIVLLSRGIMRLDARARQDVAFLGSEFLKLDARAREHTEKIDNDVKRKAERLHHVATILKNKAQSRLKNAADRHWSDGALEADLRRADFAAKQRAMEDALMALEFVKNIHDMMVSKMCNLKRSSLNPNKMTERITLEKNGKMLNFLPGEVSAERISAIQEAYWDIAAALSEADGIDYTDPEELELLVATLIDLDAMDGKSSVSLLAECSSSPDVNTRKALANALSAAPSMWTLGNAGMGALQRLAEDTTLNRCCCIENHQRIEEAVGNRGGGQLEVHGERKITRR.

The transit peptide at 1-68 (MAKPNGIIYS…YIATRGSSLR (68 aa)) directs the protein to the chloroplast. Residues 85–111 (EYRDSSDTSSMQGKDKDPASLGKSGTP) form a disordered region.

It belongs to the ATA15/OSA15 family. In terms of tissue distribution, expressed in leaves.

It is found in the plastid. The protein localises to the chloroplast. Its function is as follows. May be involved in the regulation of leaf senescence. This is Senescence-associated protein SPA15, chloroplastic from Ipomoea batatas (Sweet potato).